Consider the following 360-residue polypeptide: tRNA/tmRNA (uracil-C(5))-methyltransferase (360 aa).

S-adenosyl-L-methionine-binding residues include Gln185, Tyr213, Asn218, Glu234, and Asp294. Cys319 acts as the Nucleophile in catalysis. The Proton acceptor role is filled by Glu353.

The protein belongs to the class I-like SAM-binding methyltransferase superfamily. RNA M5U methyltransferase family. TrmA subfamily.

The enzyme catalyses uridine(54) in tRNA + S-adenosyl-L-methionine = 5-methyluridine(54) in tRNA + S-adenosyl-L-homocysteine + H(+). It carries out the reaction uridine(341) in tmRNA + S-adenosyl-L-methionine = 5-methyluridine(341) in tmRNA + S-adenosyl-L-homocysteine + H(+). Dual-specificity methyltransferase that catalyzes the formation of 5-methyluridine at position 54 (m5U54) in all tRNAs, and that of position 341 (m5U341) in tmRNA (transfer-mRNA). The polypeptide is tRNA/tmRNA (uracil-C(5))-methyltransferase (Nitratiruptor sp. (strain SB155-2)).